The primary structure comprises 497 residues: COP9 signalosome complex subunit 6 (497 aa).

The MPN domain occupies 21 to 162 (VALHPLPILE…LTIYESNLEI (142 aa)). Disordered regions lie at residues 230–282 (ATED…KNRD), 324–350 (YLSSGDASSQQQQQQQQQQQTEGLDQP), and 435–497 (AKNS…RFDH). Residues 236 to 246 (SDKPLMKKVVD) show a composition bias toward basic and acidic residues. 2 stretches are compositionally biased toward low complexity: residues 258–272 (SDDAAAEAPTTSSAA) and 333–343 (QQQQQQQQQQQ). Basic and acidic residues predominate over residues 440 to 453 (RREQASHGGGERFN). Over residues 475–488 (VGEGSASGSGGSGP) the composition is skewed to gly residues.

The protein belongs to the peptidase M67A family. CSN6 subfamily. In terms of assembly, component of the COP9 signalosome (CSN) complex.

The protein localises to the cytoplasm. The protein resides in the nucleus. Functionally, component of the COP9 signalosome (CSN) complex that acts as an regulator of the ubiquitin (Ubl) conjugation pathway by mediating the deneddylation of the cullin subunit of SCF-type E3 ubiquitin-protein ligase complexes. The CSN complex is involved in the regulation of the circadian clock through its control of the stability of the SCF(FWD1) complex. The chain is COP9 signalosome complex subunit 6 (csn-6) from Neurospora crassa (strain ATCC 24698 / 74-OR23-1A / CBS 708.71 / DSM 1257 / FGSC 987).